The sequence spans 197 residues: Small ribosomal subunit protein uS4 (197 aa).

One can recognise an S4 RNA-binding domain in the interval 87–147 (LRLDNVLFRL…EKSKSSARYK (61 aa)).

It belongs to the universal ribosomal protein uS4 family. As to quaternary structure, part of the 30S ribosomal subunit. Contacts protein S5. The interaction surface between S4 and S5 is involved in control of translational fidelity.

Functionally, one of the primary rRNA binding proteins, it binds directly to 16S rRNA where it nucleates assembly of the body of the 30S subunit. In terms of biological role, with S5 and S12 plays an important role in translational accuracy. In Lachnospira eligens (strain ATCC 27750 / DSM 3376 / VPI C15-48 / C15-B4) (Eubacterium eligens), this protein is Small ribosomal subunit protein uS4.